We begin with the raw amino-acid sequence, 59 residues long: Potassium channel toxin alpha-KTx 3.5 (59 aa).

A signal peptide spans 1–22; it reads MKVFSAVLIILFVCSMIIGINA. Intrachain disulfides connect cysteine 29–cysteine 49, cysteine 35–cysteine 54, and cysteine 39–cysteine 56. Residues 47-54 form an interaction with Ca(2+)-activated K(+) channels region; it reads GKCMNGKC.

This sequence belongs to the short scorpion toxin superfamily. Potassium channel inhibitor family. Alpha-KTx 03 subfamily. As to expression, expressed by the venom gland.

The protein resides in the secreted. Functionally, has also been shown to inhibit with high potency Kv1.3/KCNA3 and with low potency Kv1.1/KCNA1 and Kv1.2/KCNA2 voltage-gated potassium channels. Also binds and inhibits the molluscan calcium-activated potassium channels KCa (Kd=135 nM). The sequence is that of Potassium channel toxin alpha-KTx 3.5 (KTX2) from Androctonus australis (Sahara scorpion).